A 447-amino-acid chain; its full sequence is Argininosuccinate synthase (447 aa).

ATP is bound by residues 17-25 and alanine 43; that span reads AFSGGLDTS. Residue tyrosine 99 participates in L-citrulline binding. Glycine 129 and threonine 131 together coordinate ATP. Residues threonine 131, asparagine 135, and aspartate 136 each contribute to the L-aspartate site. Position 135 (asparagine 135) interacts with L-citrulline. Residue aspartate 136 participates in ATP binding. Residues arginine 139 and serine 192 each contribute to the L-citrulline site. Aspartate 194 provides a ligand contact to ATP. L-citrulline-binding residues include threonine 201, glutamate 203, and glutamate 280.

Belongs to the argininosuccinate synthase family. Type 2 subfamily. In terms of assembly, homotetramer.

The protein resides in the cytoplasm. It carries out the reaction L-citrulline + L-aspartate + ATP = 2-(N(omega)-L-arginino)succinate + AMP + diphosphate + H(+). It functions in the pathway amino-acid biosynthesis; L-arginine biosynthesis; L-arginine from L-ornithine and carbamoyl phosphate: step 2/3. This chain is Argininosuccinate synthase, found in Klebsiella pneumoniae subsp. pneumoniae (strain ATCC 700721 / MGH 78578).